The chain runs to 45 residues: Conotoxin reg3.12 (45 aa).

The propeptide occupies Asp-1–Lys-31. Cystine bridges form between Cys-32–Cys-44, Cys-33–Cys-42, and Cys-38–Cys-45.

It belongs to the conotoxin M superfamily. Expressed by the venom duct.

It localises to the secreted. The chain is Conotoxin reg3.12 from Conus regius (Crown cone).